A 662-amino-acid chain; its full sequence is Transmembrane 9 superfamily member 2 (662 aa).

The N-terminal stretch at 1–28 (MSSRPPASPPAQGSRLLLLSLLLLGTVP) is a signal peptide. The Lumenal portion of the chain corresponds to 29–299 (GPRPGSAFYL…LESMPHTHIQ (271 aa)). Residues 300-320 (WFSIMNSLVIVLFLSGMVAMI) form a helical membrane-spanning segment. Residues 321 to 373 (MLRTLHKDIARYNQMDSTEDAQEEFGWKLVHGDIFRPPRKGMLLSVFLGSGTQ) are Cytoplasmic-facing. Residues 374–394 (ILIMTFVTLFFACLGFLSPAN) traverse the membrane as a helical segment. Residues 395–397 (RGA) lie on the Lumenal side of the membrane. Residues 398-418 (LMTCAVVLWVLLGTPAGYVAA) form a helical membrane-spanning segment. At 419–436 (RFYKSFGGEKWKTNVLLT) the chain is on the cytoplasmic side. Residues 437 to 457 (SFLCPGIVFADFFIMNLILWG) form a helical membrane-spanning segment. At 458 to 465 (EGSSAAIP) the chain is on the lumenal side. Residues 466–486 (FGTLVAILALWFCISVPLTFI) form a helical membrane-spanning segment. Residues 487–521 (GAYFGFKKNAIEHPVRTNQIPRQIPEQSFYTKPLP) lie on the Cytoplasmic side of the membrane. Residues 522–542 (GIIMGGILPFGCIFIQLFFIL) traverse the membrane as a helical segment. Topologically, residues 543–553 (NSIWSHQMYYM) are lumenal. A helical membrane pass occupies residues 554 to 574 (FGFLFLVFIILVITCSEATIL). Over 575-590 (LCYFHLCAEDYHWQWR) the chain is Cytoplasmic. The helical transmembrane segment at 591 to 611 (SFLTSGFTAVYFLIYAIHYFF) threads the bilayer. The Lumenal portion of the chain corresponds to 612–630 (SKLQITGTASTILYFGYTM). Residues 631 to 651 (IMVLIFFLFTGTIGFFACFWF) form a helical membrane-spanning segment. The Cytoplasmic portion of the chain corresponds to 652 to 662 (VTKIYSVVKVD).

Belongs to the nonaspanin (TM9SF) (TC 9.A.2) family.

It localises to the endosome membrane. The protein resides in the golgi outpost. It is found in the cytoplasm. The protein localises to the cytoskeleton. Its subcellular location is the microtubule organizing center. Functionally, in the intracellular compartments, may function as a channel or small molecule transporter. The sequence is that of Transmembrane 9 superfamily member 2 (Tm9sf2) from Mus musculus (Mouse).